We begin with the raw amino-acid sequence, 437 residues long: Rhoptry apical surface protein 2 (437 aa).

Residues 45 to 179 enclose the C2 domain; sequence GCLGSLFFYL…PRINLSLHKL (135 aa). In terms of domain architecture, PH spans 230-338; that stretch reads EGPLERLNAN…FIEKLRAYRE (109 aa). Residues 341-437 form a disordered region; the sequence is STRVPSQKGA…SVVGDEEPQT (97 aa). The span at 375–384 shows a compositional bias: basic residues; the sequence is RKSGGKKSRR.

As to quaternary structure, interacts with RASP1. Interacts with RASP3.

It localises to the cytoplasmic vesicle. Its subcellular location is the secretory vesicle. It is found in the rhoptry membrane. Essential for tachyzoite invasion of host cells by controlling rhoptry secretion. Binds to phosphatidic acid (PA) and phosphatidylinositol 4,5-bisphosphate (PIP2) lipids and thus, likely contributes to the assembly of the machinery that docks or primes the rhoptry to the parasite cell membrane prior to the fusion with the host cell membrane. The sequence is that of Rhoptry apical surface protein 2 from Toxoplasma gondii (strain ATCC 50853 / GT1).